A 70-amino-acid chain; its full sequence is Large ribosomal subunit protein bL31 (70 aa).

This sequence belongs to the bacterial ribosomal protein bL31 family. Type A subfamily. Part of the 50S ribosomal subunit.

Binds the 23S rRNA. This Mycoplasma mobile (strain ATCC 43663 / 163K / NCTC 11711) (Mesomycoplasma mobile) protein is Large ribosomal subunit protein bL31.